A 65-amino-acid polypeptide reads, in one-letter code: Large ribosomal subunit protein bL35 (65 aa).

This sequence belongs to the bacterial ribosomal protein bL35 family.

This is Large ribosomal subunit protein bL35 from Psychrobacter arcticus (strain DSM 17307 / VKM B-2377 / 273-4).